Consider the following 320-residue polypeptide: MVLHSKVAIVGAGAVGASTAYALMFKNICTEIIIVDVNPDIVQAQVLDLADAASISHTPIRAGSAEEAGQADIVVITAGAKQREGEPRTKLIERNFRVLQSIIGGMQPIRPDAVILVVANPVDILTHIAKTLSGLPPNQVIGSGTYLDTTRLRVHLGDVFDVNPQSVHAFVLGEHGDSQMIAWEAASIGGQPLTSFPEFAKLDKTAISKAISGKAMEIIRLKGATFYGIGACAADLVHTIMLNRKSVHPVSVYVEKYGATFSMPAKLGWRGVEQIYEVPLTEEEEALLVKSVEALKSVEYSSTKVPEKKVHATSFSKSSC.

Arginine 88, asparagine 120, and arginine 151 together coordinate substrate. Residue asparagine 120 participates in NAD(+) binding. Histidine 175 acts as the Proton acceptor in catalysis.

Belongs to the LDH/MDH superfamily. LDH family. Homotetramer.

It localises to the cytoplasm. The catalysed reaction is (S)-lactate + NAD(+) = pyruvate + NADH + H(+). It functions in the pathway fermentation; pyruvate fermentation to lactate; (S)-lactate from pyruvate: step 1/1. In terms of biological role, converts pyruvate to lactate. The sequence is that of L-lactate dehydrogenase A (LDHA) from Rhizopus oryzae (Mucormycosis agent).